Consider the following 232-residue polypeptide: Putative N-acetylmannosamine-6-phosphate 2-epimerase (232 aa).

This sequence belongs to the NanE family.

The catalysed reaction is an N-acyl-D-glucosamine 6-phosphate = an N-acyl-D-mannosamine 6-phosphate. It functions in the pathway amino-sugar metabolism; N-acetylneuraminate degradation; D-fructose 6-phosphate from N-acetylneuraminate: step 3/5. Its function is as follows. Converts N-acetylmannosamine-6-phosphate (ManNAc-6-P) to N-acetylglucosamine-6-phosphate (GlcNAc-6-P). This is Putative N-acetylmannosamine-6-phosphate 2-epimerase from Proteus mirabilis (strain HI4320).